Reading from the N-terminus, the 85-residue chain is Large ribosomal subunit protein bL27 (85 aa).

The segment at 1 to 25 is disordered; the sequence is MAHKKAGGSSRNGRDSHSKRLGVKH.

The protein belongs to the bacterial ribosomal protein bL27 family.

The sequence is that of Large ribosomal subunit protein bL27 from Buchnera aphidicola subsp. Baizongia pistaciae (strain Bp).